The primary structure comprises 96 residues: Co-chaperonin GroES (96 aa).

It belongs to the GroES chaperonin family. Heptamer of 7 subunits arranged in a ring. Interacts with the chaperonin GroEL.

The protein resides in the cytoplasm. Its function is as follows. Together with the chaperonin GroEL, plays an essential role in assisting protein folding. The GroEL-GroES system forms a nano-cage that allows encapsulation of the non-native substrate proteins and provides a physical environment optimized to promote and accelerate protein folding. GroES binds to the apical surface of the GroEL ring, thereby capping the opening of the GroEL channel. The chain is Co-chaperonin GroES from Wolbachia sp. subsp. Drosophila simulans (strain wRi).